A 90-amino-acid polypeptide reads, in one-letter code: Small ribosomal subunit protein uS15c (90 aa).

It belongs to the universal ribosomal protein uS15 family. Part of the 30S ribosomal subunit.

Its subcellular location is the plastid. It localises to the chloroplast. The polypeptide is Small ribosomal subunit protein uS15c (rps15) (Nandina domestica (Heavenly bamboo)).